The sequence spans 1011 residues: Probable calcium-transporting ATPase (1011 aa).

Residues 1–65 lie on the Cytoplasmic side of the membrane; sequence MLPENLPTDP…WKLVLAQFED (65 aa). The chain crosses the membrane as a helical span at residues 66–84; it reads TLVRILLLAATVSFAMAVV. Residues 85 to 90 are Extracellular-facing; it reads ENNAAD. A helical membrane pass occupies residues 91–110; that stretch reads FVEPFIILLILILNATVGVW. The Cytoplasmic portion of the chain corresponds to 111–258; sequence QENRAEGAIE…QVKLDEFGVL (148 aa). A helical membrane pass occupies residues 259–278; sequence LSKVIGYICLVVFAVNLVRW. Residues 279–303 are Extracellular-facing; the sequence is YATHKPTKNETFFTRYIQPSVHCLK. A helical membrane pass occupies residues 304-321; sequence VAVALAVAAIPEGLPAVV. Over 322–770 the chain is Cytoplasmic; sequence TTCLALGTRR…RYLISSNIGE (449 aa). Catalysis depends on Asp357, which acts as the 4-aspartylphosphate intermediate. Lys514 serves as a coordination point for ATP. A helical transmembrane segment spans residues 771–794; the sequence is VVCILVTGLFGLPEALSPVQLLWV. Residues 795–835 lie on the Extracellular side of the membrane; that stretch reads NLVTDGLPATALGFNAPDRDIMEQRPRRMEEPIVNGWLFMR. Residues 836–856 form a helical membrane-spanning segment; it reads YMVIGVYVGLATVGGFLWWFL. The Cytoplasmic segment spans residues 857–885; the sequence is RHGFSWHDLTTYTACSDMTNGTCLLLANP. Residues 886 to 905 form a helical membrane-spanning segment; sequence QTARAIALSILVVVEMLNAL. Over 906 to 922 the chain is Extracellular; sequence NALSENASLIVSRPSSN. A helical transmembrane segment spans residues 923–942; the sequence is VWLLFAIFSSLSLHLIIMYV. Residues 943–1011 are Cytoplasmic-facing; sequence PFFAKLFNIV…MEKAQEKKKD (69 aa).

It belongs to the cation transport ATPase (P-type) (TC 3.A.3) family.

The protein resides in the flagellar pocket. Its subcellular location is the cell membrane. It carries out the reaction Ca(2+)(in) + ATP + H2O = Ca(2+)(out) + ADP + phosphate + H(+). In terms of biological role, this magnesium-dependent enzyme catalyzes the hydrolysis of ATP coupled with the transport of the calcium. This chain is Probable calcium-transporting ATPase (TBA1), found in Trypanosoma brucei brucei.